A 327-amino-acid chain; its full sequence is Phenylalanine--tRNA ligase alpha subunit (327 aa).

Glu-253 provides a ligand contact to Mg(2+).

This sequence belongs to the class-II aminoacyl-tRNA synthetase family. Phe-tRNA synthetase alpha subunit type 1 subfamily. As to quaternary structure, tetramer of two alpha and two beta subunits. Requires Mg(2+) as cofactor.

It localises to the cytoplasm. It catalyses the reaction tRNA(Phe) + L-phenylalanine + ATP = L-phenylalanyl-tRNA(Phe) + AMP + diphosphate + H(+). The polypeptide is Phenylalanine--tRNA ligase alpha subunit (Laribacter hongkongensis (strain HLHK9)).